The following is a 402-amino-acid chain: Imidazolonepropionase (402 aa).

Fe(3+)-binding residues include His-66 and His-68. Residues His-66 and His-68 each coordinate Zn(2+). 4-imidazolone-5-propanoate contacts are provided by Arg-75, Tyr-138, and His-171. Tyr-138 contacts N-formimidoyl-L-glutamate. A Fe(3+)-binding site is contributed by His-236. His-236 contributes to the Zn(2+) binding site. 4-imidazolone-5-propanoate is bound at residue Gln-239. A Fe(3+)-binding site is contributed by Asp-311. Residue Asp-311 coordinates Zn(2+). N-formimidoyl-L-glutamate contacts are provided by Asn-313 and Gly-315. Residue Thr-316 coordinates 4-imidazolone-5-propanoate.

The protein belongs to the metallo-dependent hydrolases superfamily. HutI family. Requires Zn(2+) as cofactor. Fe(3+) is required as a cofactor.

The protein localises to the cytoplasm. The enzyme catalyses 4-imidazolone-5-propanoate + H2O = N-formimidoyl-L-glutamate. Its pathway is amino-acid degradation; L-histidine degradation into L-glutamate; N-formimidoyl-L-glutamate from L-histidine: step 3/3. Functionally, catalyzes the hydrolytic cleavage of the carbon-nitrogen bond in imidazolone-5-propanoate to yield N-formimidoyl-L-glutamate. It is the third step in the universal histidine degradation pathway. This is Imidazolonepropionase from Pseudomonas aeruginosa (strain LESB58).